Reading from the N-terminus, the 435-residue chain is MTASPLAQKATDAFNAPICETDPEIAELLDSELGRQRNGLEMIASENFVPRAVLQCQGSVLTNKYAEGYPGHRYYGGCEYVDQIETIARERAKALFGAEYVNVQPHSGAQANAAVYQALVKPGDTVLGLALDHGGHLTHGMKINFSGRFYHAEAYGVNPVTFRIDPEIIRQRALETHPAMIIGGWSAYPRIEDFKAMKEIADEVGAKFWVDMAHFAGLVAAGLHPSPVPYADVVSSTSHKTFGGPRSGFILAKQEYAKKLNSSVFPGQQGGPLMHVIAGKAVSFKVAGTPEFKDRMQRTLDGAKILAERLLADDVKANGISVLTGGTDVHLVMVDLRNSEMDGQQGEDLLAACGITINRNTVPFDPRPASVASGLRIGTSALATRGFGPKEYEEVADIIGTALAAGPSADVTALKARVDKLAEDFPLYPDLDQIH.

Residues Leu-131 and 135–137 (GHL) contribute to the (6S)-5,6,7,8-tetrahydrofolate site. Lys-240 is subject to N6-(pyridoxal phosphate)lysine.

Belongs to the SHMT family. As to quaternary structure, homodimer. Pyridoxal 5'-phosphate is required as a cofactor.

Its subcellular location is the cytoplasm. The catalysed reaction is (6R)-5,10-methylene-5,6,7,8-tetrahydrofolate + glycine + H2O = (6S)-5,6,7,8-tetrahydrofolate + L-serine. It participates in one-carbon metabolism; tetrahydrofolate interconversion. The protein operates within amino-acid biosynthesis; glycine biosynthesis; glycine from L-serine: step 1/1. Functionally, catalyzes the reversible interconversion of serine and glycine with tetrahydrofolate (THF) serving as the one-carbon carrier. This reaction serves as the major source of one-carbon groups required for the biosynthesis of purines, thymidylate, methionine, and other important biomolecules. Also exhibits THF-independent aldolase activity toward beta-hydroxyamino acids, producing glycine and aldehydes, via a retro-aldol mechanism. The polypeptide is Serine hydroxymethyltransferase (Bifidobacterium longum subsp. infantis (strain ATCC 15697 / DSM 20088 / JCM 1222 / NCTC 11817 / S12)).